The following is a 191-amino-acid chain: UMP-CMP kinase 2 (191 aa).

ATP is bound at residue Gly12 to Thr17. Residues Ser32–Val62 are NMP. A ribonucleoside 5'-phosphate contacts are provided by residues Arg38, Ser60–Val62, and Gly88–Arg91. Asn95 provides a ligand contact to CMP. Residues Asn128–Asp136 form an LID region. Arg129 provides a ligand contact to ATP. A ribonucleoside 5'-phosphate-binding residues include Arg133 and Arg144. An ATP-binding site is contributed by Arg172.

It belongs to the adenylate kinase family. UMP-CMP kinase subfamily. Monomer. Mg(2+) serves as cofactor. As to expression, expressed in neurons and the pharynx.

It localises to the cytoplasm. It is found in the nucleus. The catalysed reaction is CMP + ATP = CDP + ADP. It carries out the reaction dCMP + ATP = dCDP + ADP. It catalyses the reaction UMP + ATP = UDP + ADP. Its function is as follows. Catalyzes the phosphorylation of pyrimidine nucleoside monophosphates at the expense of ATP. Plays an important role in de novo pyrimidine nucleotide biosynthesis. Has preference for UMP and CMP as phosphate acceptors. This Caenorhabditis elegans protein is UMP-CMP kinase 2.